A 296-amino-acid polypeptide reads, in one-letter code: Probable endonuclease 4 (296 aa).

Residues H68, H109, E144, D178, H181, H213, D226, H228, and E258 each contribute to the Zn(2+) site.

The protein belongs to the AP endonuclease 2 family. Zn(2+) serves as cofactor.

The catalysed reaction is Endonucleolytic cleavage to 5'-phosphooligonucleotide end-products.. Functionally, endonuclease IV plays a role in DNA repair. It cleaves phosphodiester bonds at apurinic or apyrimidinic (AP) sites, generating a 3'-hydroxyl group and a 5'-terminal sugar phosphate. In Staphylococcus aureus (strain MRSA252), this protein is Probable endonuclease 4.